We begin with the raw amino-acid sequence, 353 residues long: UDP-N-acetylglucosamine--N-acetylmuramyl-(pentapeptide) pyrophosphoryl-undecaprenol N-acetylglucosamine transferase (353 aa).

Residues N123, R161, S189, I243, A262–E267, and Q287 each bind UDP-N-acetyl-alpha-D-glucosamine.

It belongs to the glycosyltransferase 28 family. MurG subfamily.

The protein localises to the cell membrane. It catalyses the reaction di-trans,octa-cis-undecaprenyl diphospho-N-acetyl-alpha-D-muramoyl-L-alanyl-D-glutamyl-meso-2,6-diaminopimeloyl-D-alanyl-D-alanine + UDP-N-acetyl-alpha-D-glucosamine = di-trans,octa-cis-undecaprenyl diphospho-[N-acetyl-alpha-D-glucosaminyl-(1-&gt;4)]-N-acetyl-alpha-D-muramoyl-L-alanyl-D-glutamyl-meso-2,6-diaminopimeloyl-D-alanyl-D-alanine + UDP + H(+). Its pathway is cell wall biogenesis; peptidoglycan biosynthesis. Functionally, cell wall formation. Catalyzes the transfer of a GlcNAc subunit on undecaprenyl-pyrophosphoryl-MurNAc-pentapeptide (lipid intermediate I) to form undecaprenyl-pyrophosphoryl-MurNAc-(pentapeptide)GlcNAc (lipid intermediate II). The sequence is that of UDP-N-acetylglucosamine--N-acetylmuramyl-(pentapeptide) pyrophosphoryl-undecaprenol N-acetylglucosamine transferase from Buchnera aphidicola subsp. Baizongia pistaciae (strain Bp).